The following is a 333-amino-acid chain: Adenosine deaminase (333 aa).

H12 and H14 together coordinate Zn(2+). 3 residues coordinate substrate: H14, D16, and G170. H197 serves as a coordination point for Zn(2+). Residue E200 is the Proton donor of the active site. D278 is a binding site for Zn(2+). D279 lines the substrate pocket.

The protein belongs to the metallo-dependent hydrolases superfamily. Adenosine and AMP deaminases family. Adenosine deaminase subfamily. Zn(2+) is required as a cofactor.

The catalysed reaction is adenosine + H2O + H(+) = inosine + NH4(+). It carries out the reaction 2'-deoxyadenosine + H2O + H(+) = 2'-deoxyinosine + NH4(+). In terms of biological role, catalyzes the hydrolytic deamination of adenosine and 2-deoxyadenosine. The polypeptide is Adenosine deaminase (Salmonella agona (strain SL483)).